A 420-amino-acid chain; its full sequence is Pyridinium-3,5-bisthiocarboxylic acid mononucleotide nickel insertion protein (420 aa).

Residues 81–104 (NHEHKHNHHEIKNDEPAHSHEHHH) are disordered. A compositionally biased stretch (basic and acidic residues) spans 90 to 99 (EIKNDEPAHS).

Belongs to the LarC family.

The catalysed reaction is Ni(II)-pyridinium-3,5-bisthiocarboxylate mononucleotide = pyridinium-3,5-bisthiocarboxylate mononucleotide + Ni(2+). Its function is as follows. Involved in the biosynthesis of a nickel-pincer cofactor ((SCS)Ni(II) pincer complex). Binds Ni(2+), and functions in nickel delivery to pyridinium-3,5-bisthiocarboxylic acid mononucleotide (P2TMN), to form the mature cofactor. Is thus probably required for the activation of nickel-pincer cofactor-dependent enzymes. The sequence is that of Pyridinium-3,5-bisthiocarboxylic acid mononucleotide nickel insertion protein from Clostridium acetobutylicum (strain ATCC 824 / DSM 792 / JCM 1419 / IAM 19013 / LMG 5710 / NBRC 13948 / NRRL B-527 / VKM B-1787 / 2291 / W).